The sequence spans 354 residues: Carbonic anhydrase 12 (354 aa).

The first 24 residues, 1–24 (MPHRSLRATVVLLLVILKKQPSSS), serve as a signal peptide directing secretion. Residues 25 to 301 (APLNGSKWTY…QGLLTDTGLS (277 aa)) lie on the Extracellular side of the membrane. N28, N42, N80, and N88 each carry an N-linked (GlcNAc...) asparagine glycan. In terms of domain architecture, Alpha-carbonic anhydrase spans 30-290 (SKWTYVGPAG…FDERLVYISF (261 aa)). C50 and C231 are oxidised to a cystine. H94 serves as the catalytic Proton donor/acceptor. Residues H120, H122, and H146 each coordinate Zn(2+). Residue 227 to 228 (TT) participates in substrate binding. A helical transmembrane segment spans residues 302 to 322 (LGIILSVALAGVLGISIVLAV). Residues 323-354 (SIWLFKRKKSKKGDNKGVIYKPAIKKEAEVHA) are Cytoplasmic-facing.

It belongs to the alpha-carbonic anhydrase family. As to quaternary structure, homodimer. The cofactor is Zn(2+).

It localises to the membrane. The protein localises to the cell membrane. It catalyses the reaction hydrogencarbonate + H(+) = CO2 + H2O. With respect to regulation, inhibited by acetazolamide. Its function is as follows. Reversible hydration of carbon dioxide. In Mus musculus (Mouse), this protein is Carbonic anhydrase 12.